The chain runs to 158 residues: SsrA-binding protein (158 aa).

Positions 131–158 (YDKRQTLRERQDKREADRAMSSHRRLGE) are disordered.

Belongs to the SmpB family.

The protein localises to the cytoplasm. Required for rescue of stalled ribosomes mediated by trans-translation. Binds to transfer-messenger RNA (tmRNA), required for stable association of tmRNA with ribosomes. tmRNA and SmpB together mimic tRNA shape, replacing the anticodon stem-loop with SmpB. tmRNA is encoded by the ssrA gene; the 2 termini fold to resemble tRNA(Ala) and it encodes a 'tag peptide', a short internal open reading frame. During trans-translation Ala-aminoacylated tmRNA acts like a tRNA, entering the A-site of stalled ribosomes, displacing the stalled mRNA. The ribosome then switches to translate the ORF on the tmRNA; the nascent peptide is terminated with the 'tag peptide' encoded by the tmRNA and targeted for degradation. The ribosome is freed to recommence translation, which seems to be the essential function of trans-translation. The polypeptide is SsrA-binding protein (Clavibacter michiganensis subsp. michiganensis (strain NCPPB 382)).